The following is a 206-amino-acid chain: Small ribosomal subunit protein uS5 (206 aa).

The segment covering 1-15 (MTDTPTKQETQSNKD) has biased composition (polar residues). The tract at residues 1-50 (MTDTPTKQETQSNKDNVPGAIPVEQKKNNRNDRKRNRRGDSKNLERDSDW) is disordered. Basic and acidic residues predominate over residues 38–50 (RGDSKNLERDSDW). In terms of domain architecture, S5 DRBM spans 50 to 113 (WQERVVQIRR…SDGKKNLVRV (64 aa)).

Belongs to the universal ribosomal protein uS5 family. As to quaternary structure, part of the 30S ribosomal subunit. Contacts proteins S4 and S8.

In terms of biological role, with S4 and S12 plays an important role in translational accuracy. Functionally, located at the back of the 30S subunit body where it stabilizes the conformation of the head with respect to the body. In Prochlorococcus marinus (strain MIT 9215), this protein is Small ribosomal subunit protein uS5.